Consider the following 182-residue polypeptide: Small ribosomal subunit protein uS4c (182 aa).

Residues 8 to 36 are disordered; it reads LGALPGLTSKRPGSGSDPKNKSRSGKRSQ. In terms of domain architecture, S4 RNA-binding spans 82–143; the sequence is MRLDNILFRL…KQRSKALIQN (62 aa).

This sequence belongs to the universal ribosomal protein uS4 family. Part of the 30S ribosomal subunit. Contacts protein S5. The interaction surface between S4 and S5 is involved in control of translational fidelity.

The protein resides in the plastid. It localises to the chloroplast. One of the primary rRNA binding proteins, it binds directly to 16S rRNA where it nucleates assembly of the body of the 30S subunit. Its function is as follows. With S5 and S12 plays an important role in translational accuracy. The polypeptide is Small ribosomal subunit protein uS4c (rps4) (Dietes robinsoniana (Lord Howe wedding lily)).